The following is a 201-amino-acid chain: Translation initiation factor IF-3 (201 aa).

The protein belongs to the IF-3 family. In terms of assembly, monomer.

It localises to the cytoplasm. IF-3 binds to the 30S ribosomal subunit and shifts the equilibrium between 70S ribosomes and their 50S and 30S subunits in favor of the free subunits, thus enhancing the availability of 30S subunits on which protein synthesis initiation begins. The sequence is that of Translation initiation factor IF-3 from Mycoplasma pneumoniae (strain ATCC 29342 / M129 / Subtype 1) (Mycoplasmoides pneumoniae).